A 90-amino-acid chain; its full sequence is Small ribosomal subunit protein bS16 (90 aa).

Belongs to the bacterial ribosomal protein bS16 family.

This is Small ribosomal subunit protein bS16 from Geobacillus sp. (strain WCH70).